Here is an 842-residue protein sequence, read N- to C-terminus: Serine/threonine-protein phosphatase 4 regulatory subunit 3 (842 aa).

Regulatory subunit 3 (R3) of the histone H2A phosphatase complex (HTP-C) consisting of PPH3, PSY2 and PSY4.

It localises to the nucleus. Core regulatory subunit of the histone H2A phosphatase complex, which dephosphorylates H2AS128ph (gamma-H2A) that has been displaced from sites of DNA lesions in the double-stranded DNA break repair process. Dephosphorylation is necessary for efficient recovery from the DNA damage checkpoint. The sequence is that of Serine/threonine-protein phosphatase 4 regulatory subunit 3 (PSY2) from Candida glabrata (strain ATCC 2001 / BCRC 20586 / JCM 3761 / NBRC 0622 / NRRL Y-65 / CBS 138) (Yeast).